The chain runs to 128 residues: Phosphoribosyl-AMP cyclohydrolase (128 aa).

Residue D94 participates in Mg(2+) binding. C95 lines the Zn(2+) pocket. Mg(2+)-binding residues include D96 and D98. Positions 111 and 118 each coordinate Zn(2+).

Belongs to the PRA-CH family. In terms of assembly, homodimer. The cofactor is Mg(2+). Zn(2+) is required as a cofactor.

The protein localises to the cytoplasm. The catalysed reaction is 1-(5-phospho-beta-D-ribosyl)-5'-AMP + H2O = 1-(5-phospho-beta-D-ribosyl)-5-[(5-phospho-beta-D-ribosylamino)methylideneamino]imidazole-4-carboxamide. It functions in the pathway amino-acid biosynthesis; L-histidine biosynthesis; L-histidine from 5-phospho-alpha-D-ribose 1-diphosphate: step 3/9. In terms of biological role, catalyzes the hydrolysis of the adenine ring of phosphoribosyl-AMP. This chain is Phosphoribosyl-AMP cyclohydrolase, found in Streptomyces coelicolor (strain ATCC BAA-471 / A3(2) / M145).